The sequence spans 239 residues: THAP domain-containing protein 3 (239 aa).

A THAP-type zinc finger spans residues 1–82 (MPKSCAARQC…LKHNAVPTVF (82 aa)). Residues 84 to 177 (FQDPTQQVRE…RRTPNKQPSD (94 aa)) are disordered. S122 is subject to Phosphoserine. The HCFC1-binding motif (HBM) signature appears at 177 to 180 (DHSY).

Component of a THAP1/THAP3-HCFC1-OGT complex that contains at least, either THAP1 or THAP3, HCFC1 and OGT. Interacts directly with OGT and HCFC1 (via its HBM). Highly expressed in heart, skeletal muscle and placenta. Weaker expression in brain, kidney and liver.

Its function is as follows. Component of a THAP1/THAP3-HCFC1-OGT complex that is required for the regulation of the transcriptional activity of RRM1. The sequence is that of THAP domain-containing protein 3 (THAP3) from Homo sapiens (Human).